The sequence spans 79 residues: Large ribosomal subunit protein bL31 (79 aa).

Cys-16, Cys-18, Cys-37, and Cys-40 together coordinate Zn(2+).

It belongs to the bacterial ribosomal protein bL31 family. Type A subfamily. In terms of assembly, part of the 50S ribosomal subunit. Zn(2+) serves as cofactor.

Functionally, binds the 23S rRNA. This is Large ribosomal subunit protein bL31 from Coxiella burnetii (strain CbuG_Q212) (Coxiella burnetii (strain Q212)).